Here is a 155-residue protein sequence, read N- to C-terminus: Small ribosomal subunit protein uS7 (155 aa).

Belongs to the universal ribosomal protein uS7 family. Part of the 30S ribosomal subunit. Contacts proteins S9 and S11.

Its function is as follows. One of the primary rRNA binding proteins, it binds directly to 16S rRNA where it nucleates assembly of the head domain of the 30S subunit. Is located at the subunit interface close to the decoding center, probably blocks exit of the E-site tRNA. In Chloroherpeton thalassium (strain ATCC 35110 / GB-78), this protein is Small ribosomal subunit protein uS7.